A 151-amino-acid chain; its full sequence is Transcriptional repressor NrdR (151 aa).

The segment at 3 to 34 is a zinc-finger region; it reads CPHCGNCDDKVMESRTLAQGDCIRRRRECLAC. The ATP-cone domain maps to 49–141; it reads FMVIKKDGRR…VYKQFSNLDE (93 aa).

This sequence belongs to the NrdR family. Zn(2+) is required as a cofactor.

Negatively regulates transcription of bacterial ribonucleotide reductase nrd genes and operons by binding to NrdR-boxes. This Treponema denticola (strain ATCC 35405 / DSM 14222 / CIP 103919 / JCM 8153 / KCTC 15104) protein is Transcriptional repressor NrdR.